Here is a 363-residue protein sequence, read N- to C-terminus: 3-dehydroquinate synthase (363 aa).

NAD(+)-binding positions include 71–76 (DGEQYK), 105–109 (GVIGD), 129–130 (TT), lysine 142, lysine 151, and 169–172 (CLKT). Positions 184, 247, and 264 each coordinate Zn(2+).

Belongs to the sugar phosphate cyclases superfamily. Dehydroquinate synthase family. It depends on NAD(+) as a cofactor. Co(2+) is required as a cofactor. The cofactor is Zn(2+).

Its subcellular location is the cytoplasm. The enzyme catalyses 7-phospho-2-dehydro-3-deoxy-D-arabino-heptonate = 3-dehydroquinate + phosphate. The protein operates within metabolic intermediate biosynthesis; chorismate biosynthesis; chorismate from D-erythrose 4-phosphate and phosphoenolpyruvate: step 2/7. Functionally, catalyzes the conversion of 3-deoxy-D-arabino-heptulosonate 7-phosphate (DAHP) to dehydroquinate (DHQ). This is 3-dehydroquinate synthase from Vibrio vulnificus (strain CMCP6).